The primary structure comprises 3961 residues: Hybrid PKS-NRPS synthetase phm1 (3961 aa).

A Ketosynthase family 3 (KS3) domain is found at 4–436 (SEPIAIIGSA…GTNAHAIVEA (433 aa)). Residues cysteine 178, histidine 317, and histidine 356 each act as for beta-ketoacyl synthase activity in the active site. The malonyl-CoA:ACP transacylase (MAT) domain stretch occupies residues 541–867 (VFTGQGAQWP…RSKNDILELS (327 aa)). Positions 933-1068 (HPILGKRCLE…GTVTVTLAEP (136 aa)) are N-terminal hotdog fold. Residues 933 to 1234 (HPILGKRCLE…LELVPFTAAR (302 aa)) form a dehydratase (DH) domain region. Residues 933–1236 (HPILGKRCLE…LVPFTAARPE (304 aa)) form the PKS/mFAS DH domain. Residue histidine 966 is the Proton acceptor; for dehydratase activity of the active site. The segment at 1083 to 1236 (MTEIEVDRFY…LVPFTAARPE (154 aa)) is C-terminal hotdog fold. The Proton donor; for dehydratase activity role is filled by aspartate 1143. Residues 1376–1569 (FDFYDQGLGL…GFGGIDTSTP (194 aa)) form a methyltransferase (MT) domain region. Residues 2106–2277 (TYLLIGMSGQ…GVPGSAISIS (172 aa)) are ketoreductase (KR) domain. Residues 2386-2464 (QAATIIKDGF…ELLQEAMDRT (79 aa)) enclose the Carrier 1 domain. Serine 2424 is subject to O-(pantetheine 4'-phosphoryl)serine. Residues 2482–2527 (PVTNTATPPPEVQVTGSASDSSRSLTPDGLSTSRPSTPVRTPMTEI) form a disordered region. The span at 2495-2520 (VTGSASDSSRSLTPDGLSTSRPSTPV) shows a compositional bias: polar residues. The segment at 2553 to 2993 (PMSYGQARFW…DLPRWAGADV (441 aa)) is condensation (C) domain. The interval 3019 to 3424 (QMIGTYASKP…DGALFVHGRI (406 aa)) is adenylation (A) (KR) domain. The Carrier 2 domain occupies 3542 to 3616 (ANMEGRVAAL…GMARHVRAAF (75 aa)). Residue serine 3576 is modified to O-(pantetheine 4'-phosphoryl)serine. The tract at residues 3725 to 3871 (ITDIVFHCAA…VRPVSDVATT (147 aa)) is reductase (RED) domain.

This sequence in the C-terminal section; belongs to the NRP synthetase family.

It participates in secondary metabolite biosynthesis. Functionally, hybrid PKS-NRPS synthetase; part of the gene cluster that mediates the biosynthesis of the trans-fused decalin-containing tetramic acid phomasetin, the stereochemical opposite of the HIV-1 integrase inhibitor equisetin. The PKS module of phm1 together with the enoylreductase phm4 catalyze the formation of the polyketide unit which is then conjugated to L-serine by the condensation domain of the phm1 NRPS module. Activity of the Dieckmann cyclase domain (RED) of phm1 results in release of the Dieckmann product intermediate. The Diels-Alderase phm7 then uses the Dieckmann product of phm1 as substrate and catalyzes the Diels-Alder cycloaddition to form the decalin ring of N-desmethylphomasetin. N-desmethylphomasetin is further methylated to phomasetin by the methyltransferase phm5. This Pyrenochaetopsis sp protein is Hybrid PKS-NRPS synthetase phm1.